A 288-amino-acid polypeptide reads, in one-letter code: Energy-coupling factor transporter ATP-binding protein EcfA2 (288 aa).

An ABC transporter domain is found at Ile-3–Ser-246. ATP is bound at residue Gly-40 to Ser-47.

This sequence belongs to the ABC transporter superfamily. Energy-coupling factor EcfA family. As to quaternary structure, forms a stable energy-coupling factor (ECF) transporter complex composed of 2 membrane-embedded substrate-binding proteins (S component), 2 ATP-binding proteins (A component) and 2 transmembrane proteins (T component).

The protein resides in the cell membrane. Functionally, ATP-binding (A) component of a common energy-coupling factor (ECF) ABC-transporter complex. Unlike classic ABC transporters this ECF transporter provides the energy necessary to transport a number of different substrates. The polypeptide is Energy-coupling factor transporter ATP-binding protein EcfA2 (Listeria innocua serovar 6a (strain ATCC BAA-680 / CLIP 11262)).